The chain runs to 92 residues: Acylphosphatase (92 aa).

The 86-residue stretch at 5–90 (TYRLVICGLV…GDFVGFQLRE (86 aa)) folds into the Acylphosphatase-like domain. Residues arginine 20 and asparagine 38 contribute to the active site.

This sequence belongs to the acylphosphatase family.

The enzyme catalyses an acyl phosphate + H2O = a carboxylate + phosphate + H(+). The protein is Acylphosphatase (acyP) of Albidiferax ferrireducens (strain ATCC BAA-621 / DSM 15236 / T118) (Rhodoferax ferrireducens).